The following is a 932-amino-acid chain: MTNERKEVSEAPVNFGANLGLMLDLYDDFLQDPSSVPEDLQVLFSTIKNDDSIVPALKSTSSQNSDGTIKRVMRLIDNIRQYGHLKADIYPVNPPKRKHVPKLEIEDFDLDQQTLEGISAGIVSDHFADIYDNAYEAILRMEKRYKGPIAFEYTHINNNTERGWLKRRIETPYKVTLNNNEKRALFKQLAYVEGFEKYLHKNFVGAKRFSIEGVDALVPMLQRTITIAAKEGIKNIQIGMAHRGRLNVLTHVLEKPYEMMISEFMHTDPMKFLPEDGSLQLTAGWTGDVKYHLGGIKTTDSYGTMQRIALANNPSHLEIVAPVVEGRTRAAQDDTQRAGAPTTDHHKAMPIIIHGDAAYPGQGINFETMNLGNLKGYSTGGSLHIITNNRIGFTTEPIDARSTTYSTDVAKGYDVPIFHVNADDVEATIEAIDIAMEFRKEFHKDVVIDLVGYRRFGHNEMDEPSITNPVPYQNIRKHDSVEYVFGKKLVNEGIISEDEMHSFIEQVQKELRQAHDKINKADKMDNPDMEKPAELALPLQADEQSFTFDHLKEINDALLTYPDGFNILKKLNKVLEKRHEPFNKEDGLVDWAQAEQLAFATILQDGTPIRLTGQDSERGTFSHRHAVLHDEQTGETYTPLHHVPDQKATFDIHNSPLSEAAVVGFEYGYNVENKKSFNIWEAQYGDFANMSQMIFDNFLFSSRSKWGERSGLTLFLPHAYEGQGPEHSSARLERFLQLAAENNCTVVNLSSSSNYFHLLRAQAASLDSEQMRPLVVMSPKSLLRNKTVAKPIDEFTSGGFEPILTESYQADKVTKVILATGKMFIDLKEALAKNPDESVLLVAIERLYPFPEEEIEALLAQLPNLEEVSWVQEEPKNQGAWLYVYPYVKVLVADKYDLSYHGRIQRAAPAEGDGEIHKLVQNKIIENALKNN.

Belongs to the alpha-ketoglutarate dehydrogenase family. Homodimer. Part of the 2-oxoglutarate dehydrogenase (OGDH) complex composed of E1 (2-oxoglutarate dehydrogenase), E2 (dihydrolipoamide succinyltransferase) and E3 (dihydrolipoamide dehydrogenase); the complex contains multiple copies of the three enzymatic components (E1, E2 and E3). Thiamine diphosphate is required as a cofactor.

It catalyses the reaction N(6)-[(R)-lipoyl]-L-lysyl-[protein] + 2-oxoglutarate + H(+) = N(6)-[(R)-S(8)-succinyldihydrolipoyl]-L-lysyl-[protein] + CO2. E1 component of the 2-oxoglutarate dehydrogenase (OGDH) complex which catalyzes the decarboxylation of 2-oxoglutarate, the first step in the conversion of 2-oxoglutarate to succinyl-CoA and CO(2). This Staphylococcus aureus (strain MRSA252) protein is 2-oxoglutarate dehydrogenase E1 component.